The following is a 62-amino-acid chain: Photosystem II reaction center protein Z (62 aa).

A run of 2 helical transmembrane segments spans residues 8–28 (ALFAFIVVSFLLVVGVPVVLA) and 41–61 (FSGIGIWFLLVFLVGILNSFV).

This sequence belongs to the PsbZ family. As to quaternary structure, PSII is composed of 1 copy each of membrane proteins PsbA, PsbB, PsbC, PsbD, PsbE, PsbF, PsbH, PsbI, PsbJ, PsbK, PsbL, PsbM, PsbT, PsbY, PsbZ, Psb30/Ycf12, at least 3 peripheral proteins of the oxygen-evolving complex and a large number of cofactors. It forms dimeric complexes.

The protein localises to the plastid. The protein resides in the chloroplast thylakoid membrane. Its function is as follows. May control the interaction of photosystem II (PSII) cores with the light-harvesting antenna, regulates electron flow through the 2 photosystem reaction centers. PSII is a light-driven water plastoquinone oxidoreductase, using light energy to abstract electrons from H(2)O, generating a proton gradient subsequently used for ATP formation. The polypeptide is Photosystem II reaction center protein Z (Chlorella vulgaris (Green alga)).